We begin with the raw amino-acid sequence, 532 residues long: Zinc finger protein 350 (532 aa).

The KRAB domain occupies 8–79 (ITLEDVAVDF…EDGIHSGACS (72 aa)). 8 C2H2-type zinc fingers span residues 206-228 (HVCSECGKAFIKKSWLTDHQVMH), 234-256 (HRCSLCEKAFSRKFMLTEHQRTH), 262-284 (YECPECGKAFLKKSRLNIHQKTH), 290-312 (YICSECGKGFIQKGNLIVHQRIH), 318-340 (YICNECGKGFIQKTCLIAHQRFH), 346-368 (FVCSECGKSCSQKSGLIKHQRIH), 374-396 (FECSECGKAFSTKQKLIVHQRTH), and 402-424 (YGCNECGKAFAYMSCLVKHKRIH). A compositionally biased stretch (basic and acidic residues) spans 427–443 (EKQEAAKVENPPAERHS). The interval 427-465 (EKQEAAKVENPPAERHSSLHTSDVMQEKNSANGATTQVP) is disordered. Residues 445 to 465 (LHTSDVMQEKNSANGATTQVP) show a composition bias toward polar residues.

Belongs to the krueppel C2H2-type zinc-finger protein family. In terms of assembly, interacts with BRCA1. Interacts with RNF11. In terms of tissue distribution, widely expressed.

It localises to the nucleus. It is found in the nucleus matrix. Transcriptional repressor. Binds to a specific sequence, 5'-GGGxxxCAGxxxTTT-3', within GADD45 intron 3. This is Zinc finger protein 350 (ZNF350) from Homo sapiens (Human).